The following is a 112-amino-acid chain: Nucleoid-associated protein FTH_1374 (112 aa).

The interval 1-27 is disordered; that stretch reads MNFDMSKLMQQAQKMQEQMKKAQQERE. Over residues 17–27 the composition is skewed to basic and acidic residues; that stretch reads EQMKKAQQERE.

Belongs to the YbaB/EbfC family. As to quaternary structure, homodimer.

Its subcellular location is the cytoplasm. The protein resides in the nucleoid. In terms of biological role, binds to DNA and alters its conformation. May be involved in regulation of gene expression, nucleoid organization and DNA protection. The polypeptide is Nucleoid-associated protein FTH_1374 (Francisella tularensis subsp. holarctica (strain OSU18)).